Consider the following 347-residue polypeptide: Vitellogenin-3 (347 aa).

The first 15 residues, 1 to 15 (MRGFILALVLALVGA), serve as a signal peptide directing secretion. The N-linked (GlcNAc...) asparagine glycan is linked to Asn80. Residues 104-118 (PSATPLSSSSSTDSS) are compositionally biased toward low complexity. Disordered regions lie at residues 104–174 (PSAT…DKHC) and 200–234 (QDPR…MFLG). A compositionally biased stretch (basic and acidic residues) spans 124–133 (PGNKRDKDEI). Positions 144–163 (SSSSSSSSSTGSGSSKTCSS) are enriched in low complexity. Positions 164 to 174 (SREDSSRDKHC) are enriched in basic and acidic residues. Asn208 carries N-linked (GlcNAc...) asparagine glycosylation. Residues 209-219 (SSISSSSSSSS) are compositionally biased toward low complexity.

Phosvitin, an egg yolk storage protein, is one of the most highly phosphorylated (10%) proteins in nature. In terms of processing, cathepsin D is responsible for intraoocytic processing of vitellogenin. Post-translationally, may contain intrachain disulfide bonds. In terms of tissue distribution, produced by the liver, secreted into the blood and then sequestered by receptor mediated endocytosis into growing oocytes, where it is generally cleaved, giving rise to the respective yolk components.

In terms of biological role, precursor of the egg-yolk proteins that are sources of nutrients during early development of oviparous organisms. Its function is as follows. Phosvitin is believed to be of importance in sequestering calcium, iron and other cations for the developing embryo. The chain is Vitellogenin-3 (VTG3) from Gallus gallus (Chicken).